The chain runs to 183 residues: Glutathione-regulated potassium-efflux system ancillary protein KefG (183 aa).

Belongs to the NAD(P)H dehydrogenase (quinone) family. KefG subfamily. In terms of assembly, interacts with KefB.

It is found in the cell inner membrane. It carries out the reaction a quinone + NADH + H(+) = a quinol + NAD(+). The catalysed reaction is a quinone + NADPH + H(+) = a quinol + NADP(+). Regulatory subunit of a potassium efflux system that confers protection against electrophiles. Required for full activity of KefB. This is Glutathione-regulated potassium-efflux system ancillary protein KefG from Salmonella gallinarum (strain 287/91 / NCTC 13346).